The sequence spans 347 residues: 3-isopropylmalate dehydrogenase (347 aa).

Residues R94, R104, R128, and D219 each contribute to the substrate site. D219, D243, and D247 together coordinate Mg(2+). Residue 279–291 (GSAPDIAGQGKAD) participates in NAD(+) binding.

This sequence belongs to the isocitrate and isopropylmalate dehydrogenases family. LeuB type 2 subfamily. In terms of assembly, homodimer. Mg(2+) is required as a cofactor. Requires Mn(2+) as cofactor.

Its subcellular location is the cytoplasm. It catalyses the reaction (2R,3S)-3-isopropylmalate + NAD(+) = 4-methyl-2-oxopentanoate + CO2 + NADH. The protein operates within amino-acid biosynthesis; L-leucine biosynthesis; L-leucine from 3-methyl-2-oxobutanoate: step 3/4. Its function is as follows. Catalyzes the oxidation of 3-carboxy-2-hydroxy-4-methylpentanoate (3-isopropylmalate) to 3-carboxy-4-methyl-2-oxopentanoate. The product decarboxylates to 4-methyl-2 oxopentanoate. The protein is 3-isopropylmalate dehydrogenase of Streptomyces coelicolor (strain ATCC BAA-471 / A3(2) / M145).